A 342-amino-acid polypeptide reads, in one-letter code: DNA-directed RNA polymerase subunit alpha (342 aa).

The interval 1–239 (MTTFLAKNWS…DQLQVFINFQ (239 aa)) is alpha N-terminal domain (alpha-NTD). Positions 254–342 (INPVLLKKVY…SLAKKHEDQY (89 aa)) are alpha C-terminal domain (alpha-CTD).

The protein belongs to the RNA polymerase alpha chain family. In terms of assembly, homodimer. The RNAP catalytic core consists of 2 alpha, 1 beta, 1 beta' and 1 omega subunit. When a sigma factor is associated with the core the holoenzyme is formed, which can initiate transcription.

It carries out the reaction RNA(n) + a ribonucleoside 5'-triphosphate = RNA(n+1) + diphosphate. In terms of biological role, DNA-dependent RNA polymerase catalyzes the transcription of DNA into RNA using the four ribonucleoside triphosphates as substrates. The chain is DNA-directed RNA polymerase subunit alpha from Orientia tsutsugamushi (strain Boryong) (Rickettsia tsutsugamushi).